A 59-amino-acid chain; its full sequence is UPF0181 protein YoaH (59 aa).

This sequence belongs to the UPF0181 family.

This Shigella sonnei (strain Ss046) protein is UPF0181 protein YoaH.